The chain runs to 258 residues: Polysialic acid transport protein KpsM (258 aa).

Over 1-30 (MARSGFEVQKVTVEALFLREIRTRFGKFRL) the chain is Cytoplasmic. The ABC transmembrane type-2 domain occupies 30–251 (LGYLWAILEP…FIGLALYRTR (222 aa)). The chain crosses the membrane as a helical span at residues 31–54 (GYLWAILEPSAHLLILLGILGYVM). Over 55-61 (HRTMPDI) the chain is Periplasmic. Residues 62–81 (SFPVFLLNGLIPFFIFSSIS) form a helical membrane-spanning segment. Residues 82-108 (KRSIGAIEANQGLFNYRPVKPIDTIIA) lie on the Cytoplasmic side of the membrane. Residues 109-132 (RALLETLIYVAVYILLMLIVWMTG) traverse the membrane as a helical segment. At 133 to 143 (EYFEITNFLQL) the chain is on the periplasmic side. Residues 144-165 (VLTWSLLIILSCGVGLIFMVVG) form a helical membrane-spanning segment. At 166–174 (KTFPEMQKV) the chain is on the cytoplasmic side. The helical transmembrane segment at 175–195 (LPILLKPLYFISCIMFPLHSI) threads the bilayer. The Periplasmic portion of the chain corresponds to 196-226 (PKQYWSYLLWNPLVHVVELSREAVMPGYISE). The helical transmembrane segment at 227–247 (GVSLNYLAMFTLVTLFIGLAL) threads the bilayer. Over 248 to 258 (YRTREEAMLTS) the chain is Cytoplasmic.

The protein belongs to the ABC-2 integral membrane protein family.

The protein resides in the cell inner membrane. Functionally, kpsM and KpsT constitute a system for the transport of polysialic acid across the cytoplasmic membrane. This Escherichia coli protein is Polysialic acid transport protein KpsM (kpsM).